The chain runs to 324 residues: Antihemorrhagic factor cMSF (324 aa).

The N-terminal stretch at 1 to 19 (MHFLVALVLLGQIIGSTLS) is a signal peptide. 2 consecutive Cystatin fetuin-A-type domains span residues 22–130 (VRGD…VKCH) and 141–254 (RNCL…SDCV). The Cell attachment site motif lies at 23 to 25 (RGD). Cystine bridges form between Cys28–Cys315, Cys85–Cys96, Cys110–Cys129, Cys143–Cys146, Cys205–Cys217, Cys230–Cys253, and Cys287–Cys291. Asn204 carries N-linked (GlcNAc...) asparagine glycosylation. Asn282 is a glycosylation site (N-linked (GlcNAc...) asparagine).

Homodimer. In terms of tissue distribution, expressed by the liver.

Its subcellular location is the secreted. Suppress hemorrhage induced by metalloproteinases from the same venom (brevilysin-H3, -H4, -H6) and from habu venom (metalloproteinases HR1A and HR1B). The non-hemorrhagic brevilysin-L4 is not inhibited by cMSF. Does not inhibit serine and cysteine proteases such as trypsin, chymotrypsin, thermolysin, and papain. The inhibition may occur by formation of a non-covalent complex between this protein and the proteinases at their metalloproteinase domains. In Gloydius brevicauda (Korean slamosa snake), this protein is Antihemorrhagic factor cMSF.